The primary structure comprises 310 residues: Aspartate carbamoyltransferase catalytic subunit (310 aa).

Carbamoyl phosphate-binding residues include R58 and T59. Residue K86 participates in L-aspartate binding. Residues R108, H136, and Q139 each contribute to the carbamoyl phosphate site. L-aspartate-binding residues include R169 and R224. Positions 265 and 266 each coordinate carbamoyl phosphate.

It belongs to the aspartate/ornithine carbamoyltransferase superfamily. ATCase family. Heterododecamer (2C3:3R2) of six catalytic PyrB chains organized as two trimers (C3), and six regulatory PyrI chains organized as three dimers (R2).

The catalysed reaction is carbamoyl phosphate + L-aspartate = N-carbamoyl-L-aspartate + phosphate + H(+). Its pathway is pyrimidine metabolism; UMP biosynthesis via de novo pathway; (S)-dihydroorotate from bicarbonate: step 2/3. Catalyzes the condensation of carbamoyl phosphate and aspartate to form carbamoyl aspartate and inorganic phosphate, the committed step in the de novo pyrimidine nucleotide biosynthesis pathway. This Citrifermentans bemidjiense (strain ATCC BAA-1014 / DSM 16622 / JCM 12645 / Bem) (Geobacter bemidjiensis) protein is Aspartate carbamoyltransferase catalytic subunit.